The sequence spans 236 residues: UPF0502 protein Bcen2424_5610 (236 aa).

Belongs to the UPF0502 family.

This chain is UPF0502 protein Bcen2424_5610, found in Burkholderia cenocepacia (strain HI2424).